The sequence spans 424 residues: 3-isopropylmalate dehydratase large subunit (424 aa).

Residues C299, C359, and C362 each contribute to the [4Fe-4S] cluster site.

The protein belongs to the aconitase/IPM isomerase family. LeuC type 2 subfamily. Heterodimer of LeuC and LeuD. It depends on [4Fe-4S] cluster as a cofactor.

It catalyses the reaction (2R,3S)-3-isopropylmalate = (2S)-2-isopropylmalate. It functions in the pathway amino-acid biosynthesis; L-leucine biosynthesis; L-leucine from 3-methyl-2-oxobutanoate: step 2/4. Catalyzes the isomerization between 2-isopropylmalate and 3-isopropylmalate, via the formation of 2-isopropylmaleate. This is 3-isopropylmalate dehydratase large subunit from Hydrogenobaculum sp. (strain Y04AAS1).